Here is an 803-residue protein sequence, read N- to C-terminus: Integrin beta-1 (803 aa).

An N-terminal signal peptide occupies residues 1 to 24 (MAETNLTLLTWAGILCCLIWSGSA). Residue Gln25 is modified to Blocked amino end (Gln). Residues 25-733 (QQGGSDCIKA…ETPECPSGPD (709 aa)) lie on the Extracellular side of the membrane. Residues 30-80 (DCIKANAKSCGECIQAGPNCGWCKKTDFLQEGEPTSARCDDLAALKSKGCP) form the PSI domain. 22 disulfides stabilise this stretch: Cys31–Cys49, Cys39–Cys469, Cys42–Cys68, Cys52–Cys79, Cys211–Cys217, Cys265–Cys305, Cys405–Cys419, Cys439–Cys467, Cys471–Cys491, Cys482–Cys494, Cys496–Cys505, Cys507–Cys538, Cys521–Cys536, Cys530–Cys541, Cys543–Cys558, Cys560–Cys581, Cys565–Cys579, Cys573–Cys584, Cys586–Cys595, Cys597–Cys620, Cys604–Cys618, and Cys612–Cys623. Positions 144–382 (DYPIDLYYLM…QLIIDAYNSL (239 aa)) constitute a VWFA domain. Mg(2+) contacts are provided by Ser156 and Ser158. Residues Ser158, Asp161, Asp162, and Glu193 each contribute to the Ca(2+) site. The segment at 211–217 (CTGDQNC) is CX3CL1-binding. Asn216 carries N-linked (GlcNAc...) asparagine glycosylation. Ca(2+) contacts are provided by Asn248, Asp250, Pro252, and Glu253. Glu253 lines the Mg(2+) pocket. The N-linked (GlcNAc...) asparagine glycan is linked to Asn273. The interval 299 to 318 (LPNDGKCHLENNMYTMSHYY) is CX3CL1-binding. 6 N-linked (GlcNAc...) asparagine glycosylation sites follow: Asn367, Asn410, Asn421, Asn433, Asn445, and Asn486. Positions 387–470 (ILENSKLPKE…IHLQFICDCL (84 aa)) are interaction with TMEM182. 4 I-EGF domains span residues 471–506 (CQSE…RLCE), 507–559 (CSTD…KYCE), 560–596 (CDNF…SACD), and 597–636 (CSLD…PTCE). Residue Asn525 is glycosylated (N-linked (GlcNAc...) asparagine). Residue Asn589 is glycosylated (N-linked (GlcNAc...) asparagine). N-linked (GlcNAc...) asparagine glycosylation occurs at Asn624. 6 disulfides stabilise this stretch: Cys625–Cys635, Cys638–Cys641, Cys645–Cys696, Cys651–Cys670, Cys654–Cys666, and Cys704–Cys728. A glycan (N-linked (GlcNAc...) asparagine) is linked at Asn674. Residues 734–756 (IIPIVAGVVAGIVLIGLALLLIW) form a helical membrane-spanning segment. Topologically, residues 757-803 (KLLMIIHDRREFAKFEKEKMNAKWDTGENPIYKSAVTTVVNPKYEGK) are cytoplasmic. Position 788 is a phosphotyrosine; by Tyr-kinases (Tyr788).

Belongs to the integrin beta chain family. Heterodimer of an alpha and a beta subunit. Beta-1 associates with either alpha-1, alpha-2, alpha-3, alpha-4, alpha-5, alpha-6, alpha-7, alpha-8, alpha-9, alpha-10, alpha-11 or alpha-V. Interacts with TMEM182 and LAMB1. Expressed on surface of embryonic fibroblasts (at protein level).

It localises to the cell membrane. The protein resides in the cell projection. The protein localises to the invadopodium membrane. Its subcellular location is the ruffle membrane. It is found in the melanosome. It localises to the lamellipodium. The protein resides in the ruffle. The protein localises to the cell junction. Its subcellular location is the focal adhesion. Its function is as follows. Integrins alpha-1/beta-1, alpha-2/beta-1, alpha-10/beta-1 and alpha-11/beta-1 are receptors for collagen. Integrins alpha-1/beta-1 and alpha-2/beta-1 recognize the proline-hydroxylated sequence G-F-P-G-E-R in collagen. Integrins alpha-2/beta-1, alpha-3/beta-1, alpha-4/beta-1, alpha-5/beta-1, alpha-8/beta-1, alpha-10/beta-1, alpha-11/beta-1 and alpha-V/beta-1 are receptors for fibronectin. Alpha-4/beta-1 recognizes one or more domains within the alternatively spliced CS-1 and CS-5 regions of fibronectin. Integrin alpha-5/beta-1 is a receptor for fibrinogen. Integrin alpha-1/beta-1, alpha-2/beta-1, alpha-6/beta-1 and alpha-7/beta-1 are receptors for lamimin. Integrin alpha-6/beta-1 (ITGA6:ITGB1) is present in oocytes and is involved in sperm-egg fusion. Integrin alpha-4/beta-1 is a receptor for VCAM1 and recognizes the sequence Q-I-D-S in VCAM1. Integrin alpha-9/beta-1 is a receptor for VCAM1, cytotactin and osteopontin. It recognizes the sequence A-E-I-D-G-I-E-L in cytotactin. Integrin alpha-3/beta-1 is a receptor for epiligrin, thrombospondin and CSPG4. Integrin alpha-3/beta-1 provides a docking site for FAP (seprase) at invadopodia plasma membranes in a collagen-dependent manner and hence may participate in the adhesion, formation of invadopodia and matrix degradation processes, promoting cell invasion. Alpha-3/beta-1 may mediate with LGALS3 the stimulation by CSPG4 of endothelial cells migration. Integrin alpha-V/beta-1 is a receptor for vitronectin. Beta-1 integrins recognize the sequence R-G-D in a wide array of ligands. When associated with alpha-7/beta-1 integrin, regulates cell adhesion and laminin matrix deposition. Involved in promoting endothelial cell motility and angiogenesis. Involved in osteoblast compaction through the fibronectin fibrillogenesis cell-mediated matrix assembly process and the formation of mineralized bone nodules. May be involved in up-regulation of the activity of kinases such as PKC via binding to KRT1. Together with KRT1 and RACK1, serves as a platform for SRC activation or inactivation. ITGA4:ITGB1 binds to fractalkine (CX3CL1) and may act as its coreceptor in CX3CR1-dependent fractalkine signaling. ITGA4:ITGB1 and ITGA5:ITGB1 bind to PLA2G2A via a site (site 2) which is distinct from the classical ligand-binding site (site 1) and this induces integrin conformational changes and enhanced ligand binding to site 1. ITGA5:ITGB1 acts as a receptor for fibrillin-1 (FBN1) and mediates R-G-D-dependent cell adhesion to FBN1. ITGA5:ITGB1 acts as a receptor for fibronectin FN1 and mediates R-G-D-dependent cell adhesion to FN1. ITGA5:ITGB1 is a receptor for IL1B and binding is essential for IL1B signaling. ITGA5:ITGB3 is a receptor for soluble CD40LG and is required for CD40/CD40LG signaling. Plays an important role in myoblast differentiation and fusion during skeletal myogenesis. This is Integrin beta-1 (ITGB1) from Gallus gallus (Chicken).